The following is a 398-amino-acid chain: tRNA-specific 2-thiouridylase MnmA (398 aa).

Residues 18–25 (AMSGGVDS) and Leu44 contribute to the ATP site. Cys112 acts as the Nucleophile in catalysis. Cys112 and Cys213 are joined by a disulfide. Gly136 serves as a coordination point for ATP. Residues 163 to 165 (RDQ) are interaction with tRNA. Cys213 acts as the Cysteine persulfide intermediate in catalysis.

The protein belongs to the MnmA/TRMU family.

It localises to the cytoplasm. It catalyses the reaction S-sulfanyl-L-cysteinyl-[protein] + uridine(34) in tRNA + AH2 + ATP = 2-thiouridine(34) in tRNA + L-cysteinyl-[protein] + A + AMP + diphosphate + H(+). Its function is as follows. Catalyzes the 2-thiolation of uridine at the wobble position (U34) of tRNA, leading to the formation of s(2)U34. This is tRNA-specific 2-thiouridylase MnmA from Agrobacterium fabrum (strain C58 / ATCC 33970) (Agrobacterium tumefaciens (strain C58)).